A 196-amino-acid chain; its full sequence is Somatotropin (196 aa).

The first 16 residues, 1–16 (MDKVILVLLMSLGASS), serve as a signal peptide directing secretion. Pyrrolidone carboxylic acid is present on Gln17. His35 is a binding site for Zn(2+). Cys67 and Cys169 form a disulfide bridge. Residue Glu178 participates in Zn(2+) binding. Cysteines 186 and 194 form a disulfide.

It belongs to the somatotropin/prolactin family.

Its subcellular location is the secreted. Functionally, growth hormone plays an important role in growth control and is involved in the regulation of several anabolic processes. Implicated as an osmoregulatory substance important for seawater adaptation. This is Somatotropin (gh) from Takifugu rubripes (Japanese pufferfish).